The sequence spans 530 residues: UDP-glucuronosyltransferase 1A7 (530 aa).

An N-terminal signal peptide occupies residues M1–A25. N71, N292, and N344 each carry an N-linked (GlcNAc...) asparagine glycan. The helical transmembrane segment at V488–F504 threads the bilayer.

The protein belongs to the UDP-glycosyltransferase family. In terms of assembly, homodimer. Homooligomer. Interacts with UGT1A1, UGT1A3, UGT1A4, UGT1A6, UGT1A8, UGT1A9 and UGT1A10 to form heterodimers. Isoform 1 interacts with isoform 2/i2 suggesting that oligomerization is involved in negative regulation of transferase activity by isoform 2. Isoform 1 also interacts with respective i2 isoforms of UGT1A1, UGT1A3, UGT1A4, UGT1A6, UGT1A8, UGT1A9 and UGT1A10. Liver and gastric tissue. Isoform 1 and isoform 2 are expressed in esophagus. Neither isoform is expressed in liver, kidney, colon and small intestine.

Its subcellular location is the endoplasmic reticulum membrane. The catalysed reaction is glucuronate acceptor + UDP-alpha-D-glucuronate = acceptor beta-D-glucuronoside + UDP + H(+). It catalyses the reaction 17alpha-estradiol + UDP-alpha-D-glucuronate = 17alpha-estradiol 3-O-(beta-D-glucuronate) + UDP + H(+). The enzyme catalyses prunetin + UDP-alpha-D-glucuronate = prunetin-5-O-beta-D-glucuronide + UDP. It carries out the reaction 5-epi-5-F2t-IsoP + UDP-alpha-D-glucuronate = 5-epi-5-F2t-IsoP-glucuronide + UDP + H(+). The catalysed reaction is (E)-ferulate + UDP-alpha-D-glucuronate = (E)-ferulic acid beta-D-glucuronate ester + UDP. It catalyses the reaction candesartan + UDP-alpha-D-glucuronate = candesartan O-beta-D-glucuronoside + UDP. The enzyme catalyses SN-38 + UDP-alpha-D-glucuronate = SN-38 O-beta-D-glucuronide + UDP + H(+). It carries out the reaction mycophenolate + UDP-alpha-D-glucuronate = mycophenolate 7-O-beta-D-glucuronide + UDP + H(+). Functionally, UDP-glucuronosyltransferase (UGT) that catalyzes phase II biotransformation reactions in which lipophilic substrates are conjugated with glucuronic acid to increase the metabolite's water solubility, thereby facilitating excretion into either the urine or bile. Essential for the elimination and detoxification of drugs, xenobiotics and endogenous compounds. Catalyzes the glucuronidation of endogenous estrogen hormone epiestradiol. Involved in the glucuronidation of F2-isoprostane (5-epi-5-F2t-IsoP). Involved in the glucuronidation of the phytochemical ferulic acid at the carboxylic acid group. Also catalyzes the glucuronidation of the isoflavones genistein, daidzein, glycitein, formononetin, biochanin A and prunetin, which are phytoestrogens with anticancer and cardiovascular properties. Involved in the glucuronidation of the AGTR1 angiotensin receptor antagonist caderastan, a drug which can inhibit the effect of angiotensin II. Involved in the biotransformation of 7-ethyl-10-hydroxycamptothecin (SN-38), the pharmacologically active metabolite of the anticancer drug irinotecan. Also metabolizes mycophenolate, an immunosuppressive agent. Its function is as follows. Lacks UGT glucuronidation activity but acts as a negative regulator of isoform 1. The sequence is that of UDP-glucuronosyltransferase 1A7 from Homo sapiens (Human).